Here is a 447-residue protein sequence, read N- to C-terminus: M-phase inducer phosphatase 3 (447 aa).

Position 2 is an N-acetylserine (Ser-2). Phosphoserine is present on residues Ser-20, Ser-38, Ser-56, Ser-60, and Ser-63. Position 66 is a phosphothreonine; by CDK1 (Thr-66). Polar residues predominate over residues 81 to 90 (MSASPLTTSA). The tract at residues 81–109 (MSASPLTTSADLEDNGSLDSSGPLDRQLT) is disordered. Ser-128 is modified (phosphoserine). Thr-129 carries the post-translational modification Phosphothreonine. Ser-192 carries the phosphoserine; by CDK1 modification. Ser-213 and Ser-220 each carry phosphoserine; by PLK3. Residues 294-401 (VIERFYIIDC…FFPEYMELCD (108 aa)) form the Rhodanese domain. Cys-350 is a catalytic residue. Ser-445 bears the Phosphoserine mark.

It belongs to the MPI phosphatase family. Interacts with MAPK14 and 14-3-3 proteins. When phosphorylated on Ser-128 and/or Thr-129, interacts with PLK1. Interacts with MARK3/C-TAK1. Phosphorylated by PLK4. Phosphorylated by PLK1, leading to activate the phosphatase activity. Phosphorylated by CHEK1 and MAPKAPK2. This phosphorylation creates a binding site for 14-3-3 protein and inhibits the phosphatase activity. Phosphorylation by PLK3 at Ser-213 promotes nuclear translocation. Ser-220 is a minor phosphorylation site. Phosphorylation by CDK1 occurs at G2 and G2-M transition and leads to increased activity. In terms of tissue distribution, spleen and thymus.

It is found in the nucleus. The enzyme catalyses O-phospho-L-tyrosyl-[protein] + H2O = L-tyrosyl-[protein] + phosphate. Functions as a dosage-dependent inducer in mitotic control. Tyrosine protein phosphatase required for progression of the cell cycle. When phosphorylated, highly effective in activating G2 cells into prophase. Directly dephosphorylates CDK1 and activates its kinase activity. In Mus musculus (Mouse), this protein is M-phase inducer phosphatase 3 (Cdc25c).